The following is a 79-amino-acid chain: Mipartoxin-3 (79 aa).

Residues 1–21 form the signal peptide; that stretch reads MKTLLLTLVVVTIVCLDLGNS. 4 disulfides stabilise this stretch: C24/C41, C34/C59, C63/C71, and C72/C77.

It belongs to the three-finger toxin family. Short-chain subfamily. As to expression, expressed by the venom gland.

Its subcellular location is the secreted. In terms of biological role, snake venom neurotoxin that blocks neuromuscular transmission, presenting a postsynaptic action through the nicotinic acetylcholine receptor (nAChR). Has no cytotoxic activity. This chain is Mipartoxin-3, found in Micrurus mipartitus (Red-tailed coral snake).